The sequence spans 126 residues: Large ribosomal subunit protein mL55 (126 aa).

Residues 1–34 (MSAKGSLLRLLWQCGMTRAAPESCRYLYTSSWRA) constitute a mitochondrion transit peptide. Serine 86 carries the post-translational modification Phosphoserine.

Belongs to the mitochondrion-specific ribosomal protein mL55 family. As to quaternary structure, component of the mitochondrial ribosome large subunit (39S) which comprises a 16S rRNA and about 50 distinct proteins.

The protein localises to the mitochondrion. The polypeptide is Large ribosomal subunit protein mL55 (MRPL55) (Bos taurus (Bovine)).